The sequence spans 469 residues: MNPNQKIITIGSVSLTIATICFLMQIAILVTTVTLHFKQYECDSPANNQVMPCEPISIERNITEIVYLTNTTIEKEICPKLVEYRNWSKPQCKITGFAPFSKDNSIRLSAGGDIWVTREPYVSCDPRKCYQFALGQGTTLENKHSNDTIHDRTPHRTLLMNELGVPFHLGTRQVCIAWSSSSCHDGKAWLHVCVTGYDKNATASFIYDGRLVDSIGSWSQNILRTQESECVCINGTCTVVMTDGSASGRADTKILFIEEGKIVHISPLSGSAQHVEECSCYPRYPGVRCICRDNWKGSNRPVVDINVKDYSIDSSYVCSGLVGDTPRKNDRSSSSYCRNPNNEKGIHGVKGWAFDDGNDVWMGRTISEDSRSGYETFKVIGGWSTPNSKLQINRQVIVDSANRSGYSGIFSVEGKSCINRCFYVELIRGREQETRVWWTSNSIVVFCGTSGTYGTGSWPDGADINLMPI.

Residues 1-9 (MNPNQKIIT) are Intravirion-facing. A helical membrane pass occupies residues 10 to 30 (IGSVSLTIATICFLMQIAILV). Residues 11–33 (GSVSLTIATICFLMQIAILVTTV) are involved in apical transport and lipid raft association. The Virion surface portion of the chain corresponds to 31 to 469 (TTVTLHFKQY…DGADINLMPI (439 aa)). Residues 36–88 (HFKQYECDSPANNQVMPCEPISIERNITEIVYLTNTTIEKEICPKLVEYRNWS) form a hypervariable stalk region region. Asn-61, Asn-70, and Asn-86 each carry an N-linked (GlcNAc...) asparagine; by host glycan. The interval 91–469 (QCKITGFAPF…DGADINLMPI (379 aa)) is head of neuraminidase. Disulfide bonds link Cys-92-Cys-417, Cys-124-Cys-129, Cys-183-Cys-230, Cys-232-Cys-237, Cys-278-Cys-291, Cys-280-Cys-289, Cys-318-Cys-337, and Cys-421-Cys-447. Residue Arg-118 participates in substrate binding. A glycan (N-linked (GlcNAc...) asparagine; by host) is linked at Asn-146. Residue Asp-151 is the Proton donor/acceptor of the active site. Arg-152 contributes to the substrate binding site. Asn-200 and Asn-234 each carry an N-linked (GlcNAc...) asparagine; by host glycan. 276–277 (EE) is a substrate binding site. Arg-292 is a substrate binding site. Ca(2+) contacts are provided by Asp-293, Gly-297, and Asp-324. Arg-371 is a substrate binding site. N-linked (GlcNAc...) asparagine; by host glycosylation occurs at Asn-402. The active-site Nucleophile is the Tyr-406.

It belongs to the glycosyl hydrolase 34 family. Homotetramer. Ca(2+) is required as a cofactor. In terms of processing, N-glycosylated.

The protein resides in the virion membrane. It localises to the host apical cell membrane. It carries out the reaction Hydrolysis of alpha-(2-&gt;3)-, alpha-(2-&gt;6)-, alpha-(2-&gt;8)- glycosidic linkages of terminal sialic acid residues in oligosaccharides, glycoproteins, glycolipids, colominic acid and synthetic substrates.. With respect to regulation, inhibited by the neuraminidase inhibitors zanamivir (Relenza) and oseltamivir (Tamiflu). These drugs interfere with the release of progeny virus from infected cells and are effective against all influenza strains. Resistance to neuraminidase inhibitors is quite rare. Its function is as follows. Catalyzes the removal of terminal sialic acid residues from viral and cellular glycoconjugates. Cleaves off the terminal sialic acids on the glycosylated HA during virus budding to facilitate virus release. Additionally helps virus spread through the circulation by further removing sialic acids from the cell surface. These cleavages prevent self-aggregation and ensure the efficient spread of the progeny virus from cell to cell. Otherwise, infection would be limited to one round of replication. Described as a receptor-destroying enzyme because it cleaves a terminal sialic acid from the cellular receptors. May facilitate viral invasion of the upper airways by cleaving the sialic acid moieties on the mucin of the airway epithelial cells. Likely to plays a role in the budding process through its association with lipid rafts during intracellular transport. May additionally display a raft-association independent effect on budding. Plays a role in the determination of host range restriction on replication and virulence. Sialidase activity in late endosome/lysosome traffic seems to enhance virus replication. The chain is Neuraminidase from Aves (whales).